A 155-amino-acid chain; its full sequence is Ribosomal RNA large subunit methyltransferase H (155 aa).

Residues L72, G104, and 123-128 (LSKMTF) contribute to the S-adenosyl-L-methionine site.

It belongs to the RNA methyltransferase RlmH family. Homodimer.

It is found in the cytoplasm. The catalysed reaction is pseudouridine(1915) in 23S rRNA + S-adenosyl-L-methionine = N(3)-methylpseudouridine(1915) in 23S rRNA + S-adenosyl-L-homocysteine + H(+). Its function is as follows. Specifically methylates the pseudouridine at position 1915 (m3Psi1915) in 23S rRNA. In Cytophaga hutchinsonii (strain ATCC 33406 / DSM 1761 / CIP 103989 / NBRC 15051 / NCIMB 9469 / D465), this protein is Ribosomal RNA large subunit methyltransferase H.